An 847-amino-acid chain; its full sequence is E4 SUMO-protein ligase PIAL1 (847 aa).

Residues 113–271 (VNSPVTLISQ…EVVGSNSDCD (159 aa)) are interacting domain (IND), required for interaction with MOM1 and PIAL2. Residues 268–349 (SDCDIIEGPS…LRKILEEVGR (82 aa)) form an SP-RING-type zinc finger. C299, H301, C322, and C325 together coordinate Zn(2+). A run of 7 repeats spans residues 569–591 (QRPVPSYIAHPQTFHVNYGENAD), 592–614 (QRWMPSSIAHPQTLPVNYGGNTN), 615–637 (QRPIPSSIAHPQTLPVNYRGNTD), 638–659 (HRSTPYSITHLQTLLNYGGNAD), 660–682 (QRPMPSSITNLQTLPATYGGYAH), 683–705 (QRPMSSSITHPRTSPVNYGGTPD), and 706–728 (QRPMPSSITHPQTLPVSYGGTTD). Positions 569-728 (QRPVPSYIAH…LPVSYGGTTD (160 aa)) are 7 X 23 AA approximate tandem repeats.

Belongs to the PIAL protein ligase family. Homodimer. Interacts with MOM1 and PIAL2 to form a high molecular mass complex which mediates transcriptional gene silencing at heterochromatin regions. In terms of tissue distribution, expressed in leaves, stems and flowers, and, at low levels, in siliques and old leaves.

It is found in the nucleus. The protein operates within protein modification; protein sumoylation. Its function is as follows. Together with MOM1 and PIAL2, regulates transcriptional gene silencing (TGS) independently of changes in DNA methylation. E4-type SUMO ligase that promotes SUMO chain formation in a SCE1-dependent manner and thus contributes to a pathway for proteolytic removal of sumoylation substrates. Involved in stress responses (e.g. osmotic, salt and abscisic acid ABA) and sulfur metabolism. This chain is E4 SUMO-protein ligase PIAL1, found in Arabidopsis thaliana (Mouse-ear cress).